A 426-amino-acid chain; its full sequence is Glutamate-1-semialdehyde 2,1-aminomutase (426 aa).

N6-(pyridoxal phosphate)lysine is present on Lys-265.

The protein belongs to the class-III pyridoxal-phosphate-dependent aminotransferase family. HemL subfamily. In terms of assembly, homodimer. It depends on pyridoxal 5'-phosphate as a cofactor.

The protein resides in the cytoplasm. It carries out the reaction (S)-4-amino-5-oxopentanoate = 5-aminolevulinate. It participates in porphyrin-containing compound metabolism; protoporphyrin-IX biosynthesis; 5-aminolevulinate from L-glutamyl-tRNA(Glu): step 2/2. This is Glutamate-1-semialdehyde 2,1-aminomutase from Shigella flexneri serotype 5b (strain 8401).